A 514-amino-acid chain; its full sequence is UDP-N-acetylmuramoyl-L-alanyl-D-glutamate--2,6-diaminopimelate ligase (514 aa).

T37 contacts UDP-N-acetyl-alpha-D-muramoyl-L-alanyl-D-glutamate. G125–S131 serves as a coordination point for ATP. Residues T167 to T168, S194, Q200, and R202 contribute to the UDP-N-acetyl-alpha-D-muramoyl-L-alanyl-D-glutamate site. At K234 the chain carries N6-carboxylysine. Meso-2,6-diaminopimelate is bound by residues R406, D430–R433, G481, and E485. The Meso-diaminopimelate recognition motif signature appears at D430–R433.

Belongs to the MurCDEF family. MurE subfamily. Mg(2+) serves as cofactor. Post-translationally, carboxylation is probably crucial for Mg(2+) binding and, consequently, for the gamma-phosphate positioning of ATP.

Its subcellular location is the cytoplasm. It catalyses the reaction UDP-N-acetyl-alpha-D-muramoyl-L-alanyl-D-glutamate + meso-2,6-diaminopimelate + ATP = UDP-N-acetyl-alpha-D-muramoyl-L-alanyl-gamma-D-glutamyl-meso-2,6-diaminopimelate + ADP + phosphate + H(+). The protein operates within cell wall biogenesis; peptidoglycan biosynthesis. Its function is as follows. Catalyzes the addition of meso-diaminopimelic acid to the nucleotide precursor UDP-N-acetylmuramoyl-L-alanyl-D-glutamate (UMAG) in the biosynthesis of bacterial cell-wall peptidoglycan. The chain is UDP-N-acetylmuramoyl-L-alanyl-D-glutamate--2,6-diaminopimelate ligase from Ralstonia nicotianae (strain ATCC BAA-1114 / GMI1000) (Ralstonia solanacearum).